The chain runs to 259 residues: Deoxyribose-phosphate aldolase (259 aa).

Residue Asp102 is the Proton donor/acceptor of the active site. The active-site Schiff-base intermediate with acetaldehyde is the Lys167. Catalysis depends on Lys201, which acts as the Proton donor/acceptor.

Belongs to the DeoC/FbaB aldolase family. DeoC type 2 subfamily.

It localises to the cytoplasm. The enzyme catalyses 2-deoxy-D-ribose 5-phosphate = D-glyceraldehyde 3-phosphate + acetaldehyde. It participates in carbohydrate degradation; 2-deoxy-D-ribose 1-phosphate degradation; D-glyceraldehyde 3-phosphate and acetaldehyde from 2-deoxy-alpha-D-ribose 1-phosphate: step 2/2. Its function is as follows. Catalyzes a reversible aldol reaction between acetaldehyde and D-glyceraldehyde 3-phosphate to generate 2-deoxy-D-ribose 5-phosphate. The protein is Deoxyribose-phosphate aldolase of Escherichia coli O1:K1 / APEC.